The sequence spans 481 residues: Beta-amyrin 16-beta-monooxygenase (481 aa).

Residues 4–24 (LFIIISLVIVILTTIFILSNL) form a helical membrane-spanning segment. Cysteine 428 lines the heme pocket.

It belongs to the cytochrome P450 family. Requires heme as cofactor. As to expression, highly expressed in roots. Expressed at very low levels in leaves and petals.

The protein resides in the membrane. It carries out the reaction beta-amyrin + reduced [NADPH--hemoprotein reductase] + O2 = maniladiol + oxidized [NADPH--hemoprotein reductase] + H2O + H(+). The enzyme catalyses oleanolate + reduced [NADPH--hemoprotein reductase] + O2 = cochalate + oxidized [NADPH--hemoprotein reductase] + H2O + H(+). In terms of biological role, involved in triterpenoid saponin biosynthesis in roots. Catalyzes the hydroxylation of beta-amyrin at the C-16 beta position to form maniladiol. Is also able to oxidize oleanolat to cochalate. Has weak activity catalyzing the three-step oxidation at C-28 of beta-amyrin to form oleanolate. The polypeptide is Beta-amyrin 16-beta-monooxygenase (Platycodon grandiflorus (Balloon flower)).